Consider the following 89-residue polypeptide: UPF0297 protein MGAS9429_Spy1808 (89 aa).

This sequence belongs to the UPF0297 family.

In Streptococcus pyogenes serotype M12 (strain MGAS9429), this protein is UPF0297 protein MGAS9429_Spy1808.